We begin with the raw amino-acid sequence, 540 residues long: L-aspartate oxidase (540 aa).

Residues 16–19, Lys-38, 45–52, and Asp-223 each bind FAD; these read SGAA and STFYAQGG. Arg-290 serves as the catalytic Proton donor/acceptor. Residues Glu-375 and 391-392 contribute to the FAD site; that span reads SL.

It belongs to the FAD-dependent oxidoreductase 2 family. NadB subfamily. It depends on FAD as a cofactor.

The protein localises to the cytoplasm. It carries out the reaction L-aspartate + O2 = iminosuccinate + H2O2. The catalysed reaction is fumarate + L-aspartate = iminosuccinate + succinate. The protein operates within cofactor biosynthesis; NAD(+) biosynthesis; iminoaspartate from L-aspartate (oxidase route): step 1/1. In terms of biological role, catalyzes the oxidation of L-aspartate to iminoaspartate, the first step in the de novo biosynthesis of NAD(+). Can use either oxygen or fumarate as electron acceptors, which allows the enzyme to be functional under aerobic and anaerobic conditions. The polypeptide is L-aspartate oxidase (nadB) (Escherichia coli O157:H7).